The sequence spans 75 residues: RNA-binding protein KhpA (75 aa).

In terms of domain architecture, KH spans 29–75 (KVVYHLTVHPDDVGKVIGKNGRIAKAIRTVVYASKTDGNKRIYLDIM).

The protein belongs to the KhpA RNA-binding protein family. In terms of assembly, forms a complex with KhpB.

It is found in the cytoplasm. A probable RNA chaperone. Forms a complex with KhpB which binds to cellular RNA and controls its expression. Plays a role in peptidoglycan (PG) homeostasis and cell length regulation. The sequence is that of RNA-binding protein KhpA from Oceanobacillus iheyensis (strain DSM 14371 / CIP 107618 / JCM 11309 / KCTC 3954 / HTE831).